Consider the following 323-residue polypeptide: Replication factor C subunit 4 (323 aa).

ATP contacts are provided by residues V12, V24, 49–57 (GMPGIGKTT), N145, and R203.

The protein belongs to the activator 1 small subunits family. As to quaternary structure, replication factor C (RFC) is a heteropentamer of subunits RFC1, RFC2, RFC3, RFC4 and RFC5 and forms a complex with POL30/PCNA in the presence of ATP. Component of the RAD24-RFC complex which consists of RAD14, RFC2, RFC3, RFC4 and RFC5 and associates with the checkpoint clamp DDC1:MEC3:RAD17 complex. Component of the ELG1-RFC complex which consists of ELG1, RFC2, RFC3, RFC4 and RFC5. Component of the CTF18-RFC complex, which consists of CTF18, CTF8, DCC1, RFC2, RFC3, RFC4 and RFC5. RFC4 interacts with ECO1.

It is found in the nucleus. In terms of biological role, component of ATP-dependent clamp loader (RFC and RFC-like) complexes for DNA clamps, such as the POL30/PCNA homotrimer and the checkpoint clamp DDC1:MEC3:RAD17 complex. During a clamp loading circle, the RFC:clamp complex binds to DNA and the recognition of the double-stranded/single-stranded junction stimulates ATP hydrolysis by RFC. The complex presumably provides bipartite ATP sites in which one subunit supplies a catalytic site for hydrolysis of ATP bound to the neighboring subunit. Dissociation of RFC from the clamp leaves the clamp encircling DNA. Component of the replication factor C (RFC or activator 1) complex which loads POL30/PCNA and acts during elongation of primed DNA templates by DNA polymerase delta and epsilon. RFC has an essential but redundant activity in sister chromatid cohesion establishment. Component of the RFC-like complex CTF18-RFC which is required for efficient establishment of chromosome cohesion during S-phase and may load or unload POL30/PCNA. Component of the RFC-like RAD24-RFC complex which loads the checkpoint clamp DDC1:MEC3:RAD17 complex and is involved in DNA repair pathways. Component of the RFC-like ELG1-RFC complex which appears to have a role in DNA replication, replication fork re-start, recombination and repair. This is Replication factor C subunit 4 (RFC4) from Saccharomyces cerevisiae (strain ATCC 204508 / S288c) (Baker's yeast).